Consider the following 245-residue polypeptide: Uroporphyrinogen-III C-methyltransferase (245 aa).

S-adenosyl-L-homocysteine contacts are provided by residues Pro-12, 87–89, 117–118, Met-168, Ala-197, and Ala-225; these read GGD and TA.

This sequence belongs to the precorrin methyltransferase family.

It carries out the reaction uroporphyrinogen III + 2 S-adenosyl-L-methionine = precorrin-2 + 2 S-adenosyl-L-homocysteine + H(+). Its pathway is cofactor biosynthesis; adenosylcobalamin biosynthesis; precorrin-2 from uroporphyrinogen III: step 1/1. It functions in the pathway porphyrin-containing compound metabolism; siroheme biosynthesis; precorrin-2 from uroporphyrinogen III: step 1/1. Its function is as follows. Catalyzes the two successive C-2 and C-7 methylation reactions involved in the conversion of uroporphyrinogen III to precorrin-2 via the intermediate formation of precorrin-1. It is a step in the biosynthesis of both cobalamin (vitamin B12) and siroheme. In Pseudomonas aeruginosa (strain ATCC 15692 / DSM 22644 / CIP 104116 / JCM 14847 / LMG 12228 / 1C / PRS 101 / PAO1), this protein is Uroporphyrinogen-III C-methyltransferase (cobA).